Reading from the N-terminus, the 327-residue chain is MEYQEEASLASAEDSTFIASSPVQSVSEMKSIKQKSFQYFDDYEKNVSDKTIQFQKLQMTAKEIIDAFERDSTQRTLQIESLESKIGEQERDLNNEKLASETLREKTQLLEKENGALKVENGYLYEKSRKLEEEMAHLKKKCNVYKSKFEESSLRCKSLYSSNTKLKDSMETMKRRMETETKEMNKIKPKNDSESDRFKRNSQSLSQQSPLLDVHSPDNSNHRTMLNINNSSPIKPKKIFKPNEVKNRISRLQKTFADLENQHHSFQQICQTLRKRLENDSSTTKQRLSKLEEIIRNRAPPSYSFSLNCSHTYQPVSCVEPVNHDLS.

Positions 66 to 188 (DAFERDSTQR…TETKEMNKIK (123 aa)) form a coiled coil. Basic and acidic residues predominate over residues 175 to 199 (RRMETETKEMNKIKPKNDSESDRFK). The tract at residues 175–234 (RRMETETKEMNKIKPKNDSESDRFKRNSQSLSQQSPLLDVHSPDNSNHRTMLNINNSSPI) is disordered. The span at 202–212 (SQSLSQQSPLL) shows a compositional bias: low complexity. A compositionally biased stretch (polar residues) spans 217–232 (PDNSNHRTMLNINNSS). Residues 243–297 (NEVKNRISRLQKTFADLENQHHSFQQICQTLRKRLENDSSTTKQRLSKLEEIIRN) are a coiled coil.

As to quaternary structure, interacts with alp4, kms1 and mbo1.

It is found in the nucleus. The protein resides in the cytoplasm. Its subcellular location is the cytoskeleton. The protein localises to the microtubule organizing center. It localises to the spindle pole body. In terms of biological role, has a role in meiotic nuclear oscillation and recombination. Required to remodel astral microtubules into the 'horsetail' astral array maintaining the 'horsetail' nuclear movement. Promotes homologous paring of chromosomes during this movement. The protein is Meiotic coiled-coil protein 6 (mcp6) of Schizosaccharomyces pombe (strain 972 / ATCC 24843) (Fission yeast).